The sequence spans 128 residues: Iron-sulfur cluster insertion protein ErpA 1 (128 aa).

Iron-sulfur cluster is bound by residues C47, C111, and C113.

The protein belongs to the HesB/IscA family. Homodimer. The cofactor is iron-sulfur cluster.

Required for insertion of 4Fe-4S clusters for at least IspG. The protein is Iron-sulfur cluster insertion protein ErpA 1 of Methylococcus capsulatus (strain ATCC 33009 / NCIMB 11132 / Bath).